A 244-amino-acid chain; its full sequence is 5'-nucleotidase SurE 2 (244 aa).

A divalent metal cation is bound by residues D8, D9, S39, and N96.

This sequence belongs to the SurE nucleotidase family. It depends on a divalent metal cation as a cofactor.

Its subcellular location is the cytoplasm. It catalyses the reaction a ribonucleoside 5'-phosphate + H2O = a ribonucleoside + phosphate. Functionally, nucleotidase that shows phosphatase activity on nucleoside 5'-monophosphates. The polypeptide is 5'-nucleotidase SurE 2 (Thermus thermophilus (strain ATCC BAA-163 / DSM 7039 / HB27)).